Here is a 103-residue protein sequence, read N- to C-terminus: Histone H4 (103 aa).

Gly residues predominate over residues 1 to 14 (MSGRGKGGKGLGKG). The tract at residues 1–20 (MSGRGKGGKGLGKGGAKRHR) is disordered. The DNA-binding element occupies 17–21 (KRHRK).

Belongs to the histone H4 family. The nucleosome is a histone octamer containing two molecules each of H2A, H2B, H3 and H4 assembled in one H3-H4 heterotetramer and two H2A-H2B heterodimers. The octamer wraps approximately 147 bp of DNA.

Its subcellular location is the nucleus. It localises to the chromosome. Core component of nucleosome. Nucleosomes wrap and compact DNA into chromatin, limiting DNA accessibility to the cellular machineries which require DNA as a template. Histones thereby play a central role in transcription regulation, DNA repair, DNA replication and chromosomal stability. DNA accessibility is regulated via a complex set of post-translational modifications of histones, also called histone code, and nucleosome remodeling. This is Histone H4 from Eimeria tenella (Coccidian parasite).